The primary structure comprises 178 residues: ATP synthase subunit delta (178 aa).

The protein belongs to the ATPase delta chain family. In terms of assembly, F-type ATPases have 2 components, F(1) - the catalytic core - and F(0) - the membrane proton channel. F(1) has five subunits: alpha(3), beta(3), gamma(1), delta(1), epsilon(1). F(0) has three main subunits: a(1), b(2) and c(10-14). The alpha and beta chains form an alternating ring which encloses part of the gamma chain. F(1) is attached to F(0) by a central stalk formed by the gamma and epsilon chains, while a peripheral stalk is formed by the delta and b chains.

It localises to the cell membrane. Functionally, f(1)F(0) ATP synthase produces ATP from ADP in the presence of a proton or sodium gradient. F-type ATPases consist of two structural domains, F(1) containing the extramembraneous catalytic core and F(0) containing the membrane proton channel, linked together by a central stalk and a peripheral stalk. During catalysis, ATP synthesis in the catalytic domain of F(1) is coupled via a rotary mechanism of the central stalk subunits to proton translocation. In terms of biological role, this protein is part of the stalk that links CF(0) to CF(1). It either transmits conformational changes from CF(0) to CF(1) or is implicated in proton conduction. The sequence is that of ATP synthase subunit delta from Streptococcus pyogenes serotype M49 (strain NZ131).